Consider the following 492-residue polypeptide: Pre-mRNA-splicing factor sap61 (492 aa).

A C2H2-type zinc finger spans residues 243 to 267 (FYCEVCQKFFGKITVFEAHKKSKAH). Disordered stretches follow at residues 268–291 (NKAV…KQKG) and 337–365 (AAER…QDDE). Over residues 276-286 (SSSPSTTSNTN) the composition is skewed to low complexity. Positions 345–354 (QSTPSVSVEG) are enriched in polar residues. The segment covering 355–365 (NQDEESDQDDE) has biased composition (acidic residues). Ser-360 carries the post-translational modification Phosphoserine. The Matrin-type zinc finger occupies 397–428 (FPCEICGNYVYMGRKAFDKHFTEQRHIYGLKC).

This sequence belongs to the SF3A3 family. As to quaternary structure, belongs to the 40S cdc5-associated complex (or cwf complex), a spliceosome sub-complex reminiscent of a late-stage spliceosome composed of the U2, U5 and U6 snRNAs and at least brr2, cdc5, cwf2/prp3, cwf3/syf1, cwf4/syf3, cwf5/ecm2, spp42/cwf6, cwf7/spf27, cwf8, cwf9, cwf10, cwf11, cwf12, prp45/cwf13, cwf14, cwf15, cwf16, cwf17, cwf18, cwf19, cwf20, cwf21, cwf22, cwf23, cwf24, cwf25, cwf26, cyp7/cwf27, cwf28, cwf29/ist3, lea1, msl1, prp5/cwf1, prp10, prp12/sap130, prp17, prp22, sap61, sap62, sap114, sap145, slu7, smb1, smd1, smd3, smf1, smg1 and syf2.

Its subcellular location is the nucleus. The protein localises to the cytoplasm. Involved in mRNA splicing where it associates with cdc5 and the other cwf proteins as part of the spliceosome. The sequence is that of Pre-mRNA-splicing factor sap61 (sap61) from Schizosaccharomyces pombe (strain 972 / ATCC 24843) (Fission yeast).